The sequence spans 346 residues: Sensor histidine kinase GraS (346 aa).

The next 2 membrane-spanning stretches (helical) occupy residues 15 to 35 (INWI…AYID) and 43 to 63 (VFYI…FTFV). The Histidine kinase domain maps to 126 to 332 (EFVHDIKTPV…TFYFIFPQQN (207 aa)). A Phosphohistidine; by autocatalysis modification is found at His129.

Autophosphorylated.

Its subcellular location is the cell membrane. It catalyses the reaction ATP + protein L-histidine = ADP + protein N-phospho-L-histidine.. Its function is as follows. Member of the two-component regulatory system GraR/GraS involved in resistance against cationic antimicrobial peptides (CAMPs). GraS probably functions as a sensor protein kinase which is autophosphorylated at a histidine residue and transfers its phosphate group to GraR. In Staphylococcus epidermidis (strain ATCC 35984 / DSM 28319 / BCRC 17069 / CCUG 31568 / BM 3577 / RP62A), this protein is Sensor histidine kinase GraS (graS).